The following is a 281-amino-acid chain: ATP phosphoribosyltransferase (281 aa).

This sequence belongs to the ATP phosphoribosyltransferase family. Long subfamily. Mg(2+) serves as cofactor.

It localises to the cytoplasm. It carries out the reaction 1-(5-phospho-beta-D-ribosyl)-ATP + diphosphate = 5-phospho-alpha-D-ribose 1-diphosphate + ATP. It participates in amino-acid biosynthesis; L-histidine biosynthesis; L-histidine from 5-phospho-alpha-D-ribose 1-diphosphate: step 1/9. With respect to regulation, feedback inhibited by histidine. Catalyzes the condensation of ATP and 5-phosphoribose 1-diphosphate to form N'-(5'-phosphoribosyl)-ATP (PR-ATP). Has a crucial role in the pathway because the rate of histidine biosynthesis seems to be controlled primarily by regulation of HisG enzymatic activity. The chain is ATP phosphoribosyltransferase from Corynebacterium efficiens (strain DSM 44549 / YS-314 / AJ 12310 / JCM 11189 / NBRC 100395).